The sequence spans 145 residues: Ribosome-binding factor A (145 aa).

Basic and acidic residues predominate over residues 122-132 (KVQRDLESAPR). A disordered region spans residues 122-145 (KVQRDLESAPREDDEGEPASSSRD).

Belongs to the RbfA family. In terms of assembly, monomer. Binds 30S ribosomal subunits, but not 50S ribosomal subunits or 70S ribosomes.

The protein resides in the cytoplasm. In terms of biological role, one of several proteins that assist in the late maturation steps of the functional core of the 30S ribosomal subunit. Associates with free 30S ribosomal subunits (but not with 30S subunits that are part of 70S ribosomes or polysomes). Required for efficient processing of 16S rRNA. May interact with the 5'-terminal helix region of 16S rRNA. The sequence is that of Ribosome-binding factor A from Methylorubrum extorquens (strain CM4 / NCIMB 13688) (Methylobacterium extorquens).